The following is a 458-amino-acid chain: MEASVLSPTSWEKRRAWLRQSRNWQTQVLEEEAAAALQDALDPEPSSLDDVFQEGNPINKIEDWLQGCGCRDTEEGLSEESGQSNYSGYSSHGTSFEDDLSLGAEATLLSTNGNLFSRNFLQTPRLCQLLDLGSSLASSSMTGGTNKTSSSISEILDQVQEDAEDILFSLGFGHENHKDTSRIPARFFSNPSQAKGINFQLFLKSQVQRMEMEDPCLMLASRFKQVQTLAVTADAFFCLYSYVSKTPVQKFTPSNMFWNFDPTDVPSIRILAPEPEPYSPRERLRRAISKMCLYTGSRDRLSSSYNNPKKNSLDQIVWEVMDRVKGEKIQQDPEHRQALGEESVPPIQNTNPSTSSLPCVSYPKEETQGDMCHAHALARPGPQYHINSTQVRRQLWVLQDINEKPRSAENESPWERKSKARKNLFQRVPVDKNIKSLNLPTIQQKQNQGQARHELTNL.

The residue at position 312 (serine 312) is a Phosphoserine. Residues 328–339 (KIQQDPEHRQAL) show a composition bias toward basic and acidic residues. Disordered regions lie at residues 328 to 356 (KIQQ…STSS) and 439 to 458 (LPTI…LTNL). 2 stretches are compositionally biased toward polar residues: residues 346 to 356 (PIQNTNPSTSS) and 439 to 450 (LPTIQQKQNQGQ).

Interacts with PLCG1 and GRB2; the association is increased with prolonged stimulation of the TCR and may facilitate the assembly of the LAT signalosome. Interacts with ITPR1 and ITPR3. Interacts with HSPA9. May be phosphorylated in response to store-operated Ca(+2) entry. Expressed in lymphoid tissues, with highest expression levels detected in thymus and lower levels in spleen and lymph nodes (at protein level). Detected in CD4(+) and CD8(+) T-cells, B-cells and mast cells. Not detected in monocytes/macrophages.

The protein resides in the cytoplasm. Its subcellular location is the endoplasmic reticulum membrane. In terms of biological role, may play a role in the regulation of inositol 1,4,5-trisphosphate receptor-mediated Ca(2+) release and mitochondrial Ca(2+) uptake via the mitochondria-associated endoplasmic reticulum membrane (MAM) compartment. Required for the development and maturation of T-cells, its function being essential for the late stages of thymocyte development. Plays a role in T-cell antigen receptor (TCR)-mediated activation of the ERK and NFAT signaling pathways, possibly by serving as a scaffolding protein that promotes the assembly of the LAT signalosome in thymocytes. The polypeptide is Protein TESPA1 (Tespa1) (Mus musculus (Mouse)).